Consider the following 306-residue polypeptide: D-alanine--D-alanine ligase (306 aa).

An ATP-grasp domain is found at 101–301; the sequence is KKILAHAGLP…FPDLVEHLVR (201 aa). Position 129–185 (129–185) interacts with ATP; sequence VAELGLPVVVKAPTQGSSIGVYIVEREEDLEARITDAVAYGGTRVLVEKFIAGPELT. The Mg(2+) site is built by D256, E268, and N270.

The protein belongs to the D-alanine--D-alanine ligase family. Mg(2+) serves as cofactor. Requires Mn(2+) as cofactor.

The protein resides in the cytoplasm. It carries out the reaction 2 D-alanine + ATP = D-alanyl-D-alanine + ADP + phosphate + H(+). The protein operates within cell wall biogenesis; peptidoglycan biosynthesis. Functionally, cell wall formation. In Desulforudis audaxviator (strain MP104C), this protein is D-alanine--D-alanine ligase.